Here is a 305-residue protein sequence, read N- to C-terminus: Acetaldehyde dehydrogenase (305 aa).

NAD(+) is bound at residue 12–15 (SGNI). The Acyl-thioester intermediate role is filled by Cys-127. Residues 158-166 (SAGPGTRAN) and Asn-277 contribute to the NAD(+) site.

Belongs to the acetaldehyde dehydrogenase family.

The catalysed reaction is acetaldehyde + NAD(+) + CoA = acetyl-CoA + NADH + H(+). The chain is Acetaldehyde dehydrogenase from Mycolicibacterium paratuberculosis (strain ATCC BAA-968 / K-10) (Mycobacterium paratuberculosis).